We begin with the raw amino-acid sequence, 342 residues long: A-type ATP synthase subunit C (342 aa).

Belongs to the V-ATPase V0D/AC39 subunit family. As to quaternary structure, has multiple subunits with at least A(3), B(3), C, D, E, F, H, I and proteolipid K(x).

It localises to the cell membrane. Component of the A-type ATP synthase that produces ATP from ADP in the presence of a proton gradient across the membrane. In Archaeoglobus fulgidus (strain ATCC 49558 / DSM 4304 / JCM 9628 / NBRC 100126 / VC-16), this protein is A-type ATP synthase subunit C.